The primary structure comprises 94 residues: Large ribosomal subunit protein eL37 (94 aa).

Zn(2+)-binding residues include Cys-19, Cys-22, Cys-34, and Cys-37. The C4-type zinc finger occupies Cys-19–Cys-37.

This sequence belongs to the eukaryotic ribosomal protein eL37 family. Requires Zn(2+) as cofactor.

It is found in the cytoplasm. Its function is as follows. Binds to the 23S rRNA. This chain is Large ribosomal subunit protein eL37 (RPL37), found in Tetrahymena thermophila (strain SB210).